Here is a 324-residue protein sequence, read N- to C-terminus: Galectin-4 (324 aa).

Galectin domains are found at residues 19–150 (YKRP…INFL) and 196–324 (YVGT…YVQI). 257-263 (WGSEERK) lines the a beta-D-galactoside pocket. S259 carries the post-translational modification Phosphoserine.

As to quaternary structure, monomer. Highly expressed in full-length form in small and large intestine and stomach but was not detected in other tissues including lung, liver, kidney and spleen.

Its function is as follows. Galectin that binds lactose and a related range of sugars. The chain is Galectin-4 (Lgals4) from Rattus norvegicus (Rat).